The sequence spans 208 residues: Mediator of RNA polymerase II transcription subunit 18 (208 aa).

This sequence belongs to the Mediator complex subunit 18 family. As to quaternary structure, component of the Mediator complex.

It is found in the nucleus. Component of the Mediator complex, a coactivator involved in the regulated transcription of nearly all RNA polymerase II-dependent genes. Mediator functions as a bridge to convey information from gene-specific regulatory proteins to the basal RNA polymerase II transcription machinery. Mediator is recruited to promoters by direct interactions with regulatory proteins and serves as a scaffold for the assembly of a functional preinitiation complex with RNA polymerase II and the general transcription factors. The sequence is that of Mediator of RNA polymerase II transcription subunit 18 (med18) from Danio rerio (Zebrafish).